A 593-amino-acid chain; its full sequence is MVNDASSISRSGYTQNPRLAEAAFEGVRKNTDFLKAADKAFKDVVATKAGDLKAGTKSGESAINTVGLKPPTDAAREKLSSEGQLTLLLGKLMTLLGDVSLSQLESRLAVWQAMIESQKEMGIQVSKEFQTALGEAQEATDLYEASIKKTDTAKSVYDAATKKLTQAQNKLQSLDPADPGYAQAEAAVEQAGKEATEAKEALDKATDATVKAGTDAKAKAEKADNILTKFQGTANAASQNQVSQGEQDNLSNVARLTMLMAMFIEIVGKNTEESLQNDLALFNALQEGRQAEMEKKSAEFQEETRKAEETNRIMGCIGKVLGALLTIVSVVAAVFTGGASLALAAVGLAVMVADEIVKAATGVSFIQQALNPIMEHVLKPLMELIGKAITKALEGLGVDKKTAEMAGSIVGAIVAAIAMVAVIVVVAVVGKGAAAKLGNALSKMMGETIKKLVPNVLKQLAQNGSKLFTQGMQRITSGLGNVGSKMGLQTNALSKELVGNTLNKVALGMEVTNTAAQSAGGVAEGVFIKNASEALADFMLARFAMDQIQQWLKQSVEIFGENQKVTAELQKAMSSAVQQNADASRFILRQSRA.

Coiled coils occupy residues 151 to 208 (DTAK…ATDA) and 287 to 314 (EGRQ…NRIM). Transmembrane regions (helical) follow at residues 330–350 (VVAA…GLAV) and 409–429 (IVGA…VAVV).

It belongs to the SctE/SipB/YopB family. As to quaternary structure, the core secretion machinery of the T3SS is composed of approximately 20 different proteins, including cytoplasmic components, a base, an export apparatus and a needle. This subunit is involved in the formation of a pore, called the translocon, in host membrane.

It is found in the secreted. The protein resides in the host membrane. Functionally, component of the type III secretion system 1 (SPI-1 T3SS), also called injectisome, which is used to inject bacterial effector proteins into eukaryotic host cells. SipB/SctE1 and SipC/SctB are inserted into the host membrane where they form a pore and allow the translocation of effector proteins into the cytosol of target cells. This Salmonella dublin protein is SPI-1 type 3 secretion system translocon protein SctE.